The sequence spans 230 residues: Response regulator MprA (230 aa).

The region spanning 4–118 (RILVVDDDRA…ELLARMRALL (115 aa)) is the Response regulatory domain. At D48 the chain carries 4-aspartylphosphate. Residues 129-227 (SMAMRFSDLT…VRGVGYVLRE (99 aa)) constitute a DNA-binding region (ompR/PhoB-type).

Phosphorylated and dephosphorylated by MprB.

It is found in the cytoplasm. Its function is as follows. Member of the two-component regulatory system MprB/MprA which contributes to maintaining a balance among several systems involved in stress resistance and is required for establishment and maintenance of persistent infection in the host. Functions as a transcriptional regulator that recognizes a 19-bp nucleotide motif comprizing two loosely conserved 8-bp direct DNA-binding motif repeats separated by a 3-bp spacer region. The chain is Response regulator MprA (mprA) from Mycobacterium tuberculosis (strain ATCC 25177 / H37Ra).